Here is a 118-residue protein sequence, read N- to C-terminus: U16-barytoxin-Tl1c (118 aa).

Residues 1–16 (MKTIIVFLSFLVLVLA) form the signal peptide. Residues 17–76 (TKFGDANEGVNREQTKEVIQNEFRGDFLNEMAAMSLLQQLEAIESALLEKEADRNSRQKR) constitute a propeptide that is removed on maturation. Disulfide bonds link cysteine 77–cysteine 92, cysteine 84–cysteine 97, and cysteine 91–cysteine 112.

The protein belongs to the neurotoxin 14 (magi-1) family. 06 (ICK-Trit) subfamily. In terms of tissue distribution, expressed by the venom gland.

It localises to the secreted. In terms of biological role, ion channel inhibitor. The chain is U16-barytoxin-Tl1c from Trittame loki (Brush-footed trapdoor spider).